Reading from the N-terminus, the 431-residue chain is Tyrosine--tRNA ligase (431 aa).

Tyr-34 provides a ligand contact to L-tyrosine. The short motif at 39-48 is the 'HIGH' region element; sequence PTADSLHIGH. 2 residues coordinate L-tyrosine: Tyr-171 and Gln-175. Positions 231–235 match the 'KMSKS' region motif; sequence KFGKT. An ATP-binding site is contributed by Lys-234. The 70-residue stretch at 353 to 422 folds into the S4 RNA-binding domain; it reads INVVEALVKT…GKYTILRRGK (70 aa).

Belongs to the class-I aminoacyl-tRNA synthetase family. TyrS type 1 subfamily. In terms of assembly, homodimer.

Its subcellular location is the cytoplasm. The catalysed reaction is tRNA(Tyr) + L-tyrosine + ATP = L-tyrosyl-tRNA(Tyr) + AMP + diphosphate + H(+). In terms of biological role, catalyzes the attachment of tyrosine to tRNA(Tyr) in a two-step reaction: tyrosine is first activated by ATP to form Tyr-AMP and then transferred to the acceptor end of tRNA(Tyr). The chain is Tyrosine--tRNA ligase from Neisseria meningitidis serogroup C / serotype 2a (strain ATCC 700532 / DSM 15464 / FAM18).